The following is a 406-amino-acid chain: Peptidase T (406 aa).

His81 contributes to the Zn(2+) binding site. Asp83 is an active-site residue. Asp142 serves as a coordination point for Zn(2+). The Proton acceptor role is filled by Glu176. Positions 177, 199, and 381 each coordinate Zn(2+).

This sequence belongs to the peptidase M20B family. The cofactor is Zn(2+).

It localises to the cytoplasm. It carries out the reaction Release of the N-terminal residue from a tripeptide.. In terms of biological role, cleaves the N-terminal amino acid of tripeptides. In Streptococcus pneumoniae serotype 2 (strain D39 / NCTC 7466), this protein is Peptidase T.